Reading from the N-terminus, the 997-residue chain is Translation initiation factor IF-2 (997 aa).

The segment at 101–409 is disordered; it reads ELAAEQAAAR…QHQDRRHEQV (309 aa). Composition is skewed to low complexity over residues 116 to 185, 195 to 208, and 244 to 280; these read AEAV…QAEP, AAPA…VEPA, and PSAP…PAAP. Residues 281-292 are compositionally biased toward basic and acidic residues; the sequence is DRAREEARRAAE. Residues 385–394 are compositionally biased toward gly residues; that stretch reads RAGGKGGRGG. Residues 400-409 are compositionally biased toward basic and acidic residues; that stretch reads QHQDRRHEQV. The 168-residue stretch at 498-665 folds into the tr-type G domain; that stretch reads PRAPVVTVMG…NVLLQAEILE (168 aa). The segment at 507–514 is G1; the sequence is GHVDHGKT. 507–514 provides a ligand contact to GTP; sequence GHVDHGKT. The tract at residues 532-536 is G2; the sequence is GITQH. The G3 stretch occupies residues 553 to 556; that stretch reads DTPG. Residues 553 to 557 and 607 to 610 contribute to the GTP site; these read DTPGH and NKID. Positions 607–610 are G4; it reads NKID. Residues 643-645 are G5; it reads SAK.

This sequence belongs to the TRAFAC class translation factor GTPase superfamily. Classic translation factor GTPase family. IF-2 subfamily.

It localises to the cytoplasm. Functionally, one of the essential components for the initiation of protein synthesis. Protects formylmethionyl-tRNA from spontaneous hydrolysis and promotes its binding to the 30S ribosomal subunits. Also involved in the hydrolysis of GTP during the formation of the 70S ribosomal complex. In Bordetella bronchiseptica (strain ATCC BAA-588 / NCTC 13252 / RB50) (Alcaligenes bronchisepticus), this protein is Translation initiation factor IF-2.